The sequence spans 214 residues: Adenylate kinase (214 aa).

ATP is bound at residue 10–15; sequence GAGKGT. The segment at 30 to 59 is NMP; sequence STGDMLRAAVKAGSELGLKAKEIMDAGKLV. AMP-binding positions include T31, R36, 57-59, 85-88, and Q92; these read KLV and GFPR. Residues 122 to 159 are LID; sequence GRRVHAASGRVYHVKFNPPKVEDKDDVTGEDLTIRKDD. ATP is bound by residues R123 and 132 to 133; that span reads VY. AMP contacts are provided by R156 and R167. Position 200 (R200) interacts with ATP.

This sequence belongs to the adenylate kinase family. In terms of assembly, monomer.

It localises to the cytoplasm. The enzyme catalyses AMP + ATP = 2 ADP. Its pathway is purine metabolism; AMP biosynthesis via salvage pathway; AMP from ADP: step 1/1. In terms of biological role, catalyzes the reversible transfer of the terminal phosphate group between ATP and AMP. Plays an important role in cellular energy homeostasis and in adenine nucleotide metabolism. This chain is Adenylate kinase, found in Yersinia enterocolitica serotype O:8 / biotype 1B (strain NCTC 13174 / 8081).